The chain runs to 222 residues: Small ribosomal subunit protein uS3 (222 aa).

Positions 39–108 constitute a KH type-2 domain; sequence IRRHIKEKLY…TISLDIKEIK (70 aa).

The protein belongs to the universal ribosomal protein uS3 family. In terms of assembly, part of the 30S ribosomal subunit. Forms a tight complex with proteins S10 and S14.

Functionally, binds the lower part of the 30S subunit head. Binds mRNA in the 70S ribosome, positioning it for translation. This Caldicellulosiruptor saccharolyticus (strain ATCC 43494 / DSM 8903 / Tp8T 6331) protein is Small ribosomal subunit protein uS3.